Reading from the N-terminus, the 197-residue chain is Adrenodoxin-like protein 2, mitochondrial (197 aa).

The N-terminal 74 residues, 1–74 (MVFHRLSRLG…TSFSTTSEKG (74 aa)), are a transit peptide targeting the mitochondrion. Positions 81-184 (INVTFVDKDG…GVRLAIPSAT (104 aa)) constitute a 2Fe-2S ferredoxin-type domain. [2Fe-2S] cluster is bound by residues cysteine 118, cysteine 124, cysteine 127, and cysteine 165.

The protein belongs to the adrenodoxin/putidaredoxin family. The cofactor is [2Fe-2S] cluster.

It localises to the mitochondrion. Its function is as follows. Associates with the adrenodoxin reductase MFDR to form an efficient low potential electron transfer chain that is able to reduce cytochrome C. This Arabidopsis thaliana (Mouse-ear cress) protein is Adrenodoxin-like protein 2, mitochondrial.